A 205-amino-acid chain; its full sequence is Small ribosomal subunit protein uS4 (205 aa).

The tract at residues 20-44 is disordered; sequence WGRPKSPVNRREYGPGQHGQRRKGK. Residues 94–154 form the S4 RNA-binding domain; the sequence is SRLDAIVYRS…ERSKQLLLVL (61 aa).

Belongs to the universal ribosomal protein uS4 family. As to quaternary structure, part of the 30S ribosomal subunit. Contacts protein S5. The interaction surface between S4 and S5 is involved in control of translational fidelity.

One of the primary rRNA binding proteins, it binds directly to 16S rRNA where it nucleates assembly of the body of the 30S subunit. Functionally, with S5 and S12 plays an important role in translational accuracy. The chain is Small ribosomal subunit protein uS4 from Bartonella bacilliformis (strain ATCC 35685 / KC583 / Herrer 020/F12,63).